The primary structure comprises 224 residues: Small ribosomal subunit protein uS3 (224 aa).

Positions 39–107 constitute a KH type-2 domain; sequence IREFLKKKPS…DVWVEIAEVK (69 aa).

The protein belongs to the universal ribosomal protein uS3 family. Part of the 30S ribosomal subunit. Forms a tight complex with proteins S10 and S14.

Its function is as follows. Binds the lower part of the 30S subunit head. Binds mRNA in the 70S ribosome, positioning it for translation. This chain is Small ribosomal subunit protein uS3, found in Chlamydia muridarum (strain MoPn / Nigg).